Here is an 89-residue protein sequence, read N- to C-terminus: Small ribosomal subunit protein uS15 (89 aa).

It belongs to the universal ribosomal protein uS15 family. In terms of assembly, part of the 30S ribosomal subunit. Forms a bridge to the 50S subunit in the 70S ribosome, contacting the 23S rRNA.

Functionally, one of the primary rRNA binding proteins, it binds directly to 16S rRNA where it helps nucleate assembly of the platform of the 30S subunit by binding and bridging several RNA helices of the 16S rRNA. Forms an intersubunit bridge (bridge B4) with the 23S rRNA of the 50S subunit in the ribosome. This Paraburkholderia phymatum (strain DSM 17167 / CIP 108236 / LMG 21445 / STM815) (Burkholderia phymatum) protein is Small ribosomal subunit protein uS15.